Reading from the N-terminus, the 450-residue chain is Phosphopentomutase (450 aa).

Serine 93 serves as the catalytic Phosphoserine intermediate. Residues serine 93, aspartate 231, aspartate 233, and aspartate 235 each contribute to the Mg(2+) site. The residue at position 93 (serine 93) is a Phosphoserine; by autocatalysis.

It belongs to the phosphohexose mutase family. Homotetramer. Requires Mg(2+) as cofactor. Post-translationally, activated by phosphorylation.

It catalyses the reaction alpha-D-ribose 1-phosphate = D-ribose 5-phosphate. The enzyme catalyses 2-deoxy-alpha-D-ribose 1-phosphate = 2-deoxy-D-ribose 5-phosphate. Catalyzes the conversion of deoxyribose 1-phosphate to deoxyribose 5-phosphate. Also shows weak activity with glucose 1-phosphate and mannose 1-phosphate. Could be involved in pentose biosynthesis. The protein is Phosphopentomutase of Thermococcus kodakarensis (strain ATCC BAA-918 / JCM 12380 / KOD1) (Pyrococcus kodakaraensis (strain KOD1)).